A 261-amino-acid polypeptide reads, in one-letter code: UPF0328 protein ECU03_1620 (261 aa).

It belongs to the UPF0328 family.

The chain is UPF0328 protein ECU03_1620 from Encephalitozoon cuniculi (strain GB-M1) (Microsporidian parasite).